A 682-amino-acid chain; its full sequence is K(+)-insensitive pyrophosphate-energized proton pump 2 (682 aa).

The next 5 helical transmembrane spans lie at 1–21, 56–76, 78–98, 130–150, and 160–180; these read MELF…ALYM, TIAG…RQYH, AVAF…GMYV, LAVT…FGGA, and IVGF…SGGI. Lysine 183 contributes to the substrate binding site. Mg(2+) contacts are provided by aspartate 186, aspartate 190, and aspartate 216. The next 7 membrane-spanning stretches (helical) occupy residues 237–257, 258–278, 291–311, 318–338, 353–373, 375–395, and 404–424; these read IGAM…GIVF, PLVA…FVRA, GYIV…RYML, FIYF…FVLI, IARA…AVGF, STAL…WLGL, and LYGT…ILAM. Aspartate 432 contacts Mg(2+). The next 4 membrane-spanning stretches (helical) occupy residues 468–488, 506–526, 574–594, and 595–615; these read YAIG…IDEV, EVFV…STAI, MVLP…VLKA, and EAAA…ALFL. Ca(2+) is bound by residues aspartate 623, aspartate 649, and aspartate 653. Position 656 (lysine 656) interacts with substrate. The chain crosses the membrane as a helical span at residues 662 to 682; it reads SLHVLVKLISTITLVLAGLFI.

It belongs to the H(+)-translocating pyrophosphatase (TC 3.A.10) family. K(+)-insensitive subfamily. As to quaternary structure, homodimer. It depends on Mg(2+) as a cofactor.

It localises to the cell membrane. It carries out the reaction diphosphate + H2O + H(+)(in) = 2 phosphate + 2 H(+)(out). In terms of biological role, proton pump that utilizes the energy of pyrophosphate hydrolysis as the driving force for proton movement across the membrane. Generates a proton motive force. The polypeptide is K(+)-insensitive pyrophosphate-energized proton pump 2 (Moorella thermoacetica (strain ATCC 39073 / JCM 9320)).